The chain runs to 202 residues: Superoxide dismutase [Mn], mitochondrial (202 aa).

The transit peptide at 1–5 directs the protein to the mitochondrion; the sequence is HGRGM. Histidine 31 provides a ligand contact to Mn(2+). The residue at position 39 (tyrosine 39) is a 3'-nitrotyrosine. Lysine 49 is modified (N6-acetyllysine; alternate). Residue lysine 49 is modified to N6-succinyllysine; alternate. Histidine 79 provides a ligand contact to Mn(2+). Lysine 95 bears the N6-acetyllysine mark. Residues lysine 103 and lysine 111 each carry the N6-acetyllysine; alternate modification. An N6-succinyllysine; alternate mark is found at lysine 103 and lysine 111. 2 residues coordinate Mn(2+): aspartate 164 and histidine 168. Residue lysine 183 is modified to N6-acetyllysine.

It belongs to the iron/manganese superoxide dismutase family. Homotetramer. Mn(2+) is required as a cofactor. Nitrated under oxidative stress. Nitration coupled with oxidation inhibits the catalytic activity. In terms of processing, acetylation at Lys-122 decreases enzymatic activity. Deacetylated by SIRT3 upon exposure to ionizing radiations or after long fasting. Post-translationally, polyubiquitinated; leading to proteasomal degradation. Deubiquitinated by USP36 which increases protein stability.

The protein resides in the mitochondrion matrix. It carries out the reaction 2 superoxide + 2 H(+) = H2O2 + O2. Functionally, destroys superoxide anion radicals which are normally produced within the cells and which are toxic to biological systems. The chain is Superoxide dismutase [Mn], mitochondrial (SOD2) from Oryctolagus cuniculus (Rabbit).